The chain runs to 444 residues: ATP-dependent protease ATPase subunit HslU (444 aa).

ATP is bound by residues Ile-20 and 62 to 67 (GVGKTE). The tract at residues 130–158 (EDRILDALVPPPRGASGEPERGEDNSARQ) is disordered. ATP is bound by residues Asp-257, Glu-322, and Arg-394.

It belongs to the ClpX chaperone family. HslU subfamily. As to quaternary structure, a double ring-shaped homohexamer of HslV is capped on each side by a ring-shaped HslU homohexamer. The assembly of the HslU/HslV complex is dependent on binding of ATP.

It localises to the cytoplasm. Its function is as follows. ATPase subunit of a proteasome-like degradation complex; this subunit has chaperone activity. The binding of ATP and its subsequent hydrolysis by HslU are essential for unfolding of protein substrates subsequently hydrolyzed by HslV. HslU recognizes the N-terminal part of its protein substrates and unfolds these before they are guided to HslV for hydrolysis. The sequence is that of ATP-dependent protease ATPase subunit HslU from Bordetella parapertussis (strain 12822 / ATCC BAA-587 / NCTC 13253).